The chain runs to 416 residues: Serine hydroxymethyltransferase (416 aa).

Residues Leu-121 and Gly-125–Leu-127 each bind (6S)-5,6,7,8-tetrahydrofolate. Position 230 is an N6-(pyridoxal phosphate)lysine (Lys-230).

Belongs to the SHMT family. As to quaternary structure, homodimer. Pyridoxal 5'-phosphate serves as cofactor.

Its subcellular location is the cytoplasm. It carries out the reaction (6R)-5,10-methylene-5,6,7,8-tetrahydrofolate + glycine + H2O = (6S)-5,6,7,8-tetrahydrofolate + L-serine. It functions in the pathway one-carbon metabolism; tetrahydrofolate interconversion. Its pathway is amino-acid biosynthesis; glycine biosynthesis; glycine from L-serine: step 1/1. Functionally, catalyzes the reversible interconversion of serine and glycine with tetrahydrofolate (THF) serving as the one-carbon carrier. This reaction serves as the major source of one-carbon groups required for the biosynthesis of purines, thymidylate, methionine, and other important biomolecules. Also exhibits THF-independent aldolase activity toward beta-hydroxyamino acids, producing glycine and aldehydes, via a retro-aldol mechanism. The sequence is that of Serine hydroxymethyltransferase from Nitrosospira multiformis (strain ATCC 25196 / NCIMB 11849 / C 71).